Here is a 358-residue protein sequence, read N- to C-terminus: uncharacterized protein (358 aa).

The protein belongs to the methyltransferase superfamily.

This is an uncharacterized protein from Mycobacterium tuberculosis (strain CDC 1551 / Oshkosh).